Consider the following 401-residue polypeptide: Protein-glutamate methylesterase/protein-glutamine glutaminase (401 aa).

Positions 16-134 constitute a Response regulatory domain; that stretch reads RVLVIDDSAV…LAGAEEFRRD (119 aa). Asp-67 carries the post-translational modification 4-aspartylphosphate. The interval 146 to 208 is disordered; the sequence is PIPPVPTQRD…PQGRGTPRNT (63 aa). Composition is skewed to low complexity over residues 166–176 and 185–199; these read AAPGAPVARSI and SAPAKKAFAPVAQPP. One can recognise a CheB-type methylesterase domain in the interval 205-400; that stretch reads PRNTARPEII…PGIVRRAKGG (196 aa). Active-site residues include Ser-219, His-246, and Asp-342.

It belongs to the CheB family. In terms of processing, phosphorylated by CheA. Phosphorylation of the N-terminal regulatory domain activates the methylesterase activity.

The protein localises to the cytoplasm. The catalysed reaction is [protein]-L-glutamate 5-O-methyl ester + H2O = L-glutamyl-[protein] + methanol + H(+). The enzyme catalyses L-glutaminyl-[protein] + H2O = L-glutamyl-[protein] + NH4(+). Involved in chemotaxis. Part of a chemotaxis signal transduction system that modulates chemotaxis in response to various stimuli. Catalyzes the demethylation of specific methylglutamate residues introduced into the chemoreceptors (methyl-accepting chemotaxis proteins or MCP) by CheR. Also mediates the irreversible deamidation of specific glutamine residues to glutamic acid. This Maricaulis maris (strain MCS10) (Caulobacter maris) protein is Protein-glutamate methylesterase/protein-glutamine glutaminase.